A 1321-amino-acid polypeptide reads, in one-letter code: Lysine-specific demethylase 3A (1321 aa).

A phosphoserine mark is found at Ser264 and Ser325. 3 disordered regions span residues 307–336 (ATPP…IPQG), 383–402 (LTEP…QENR), and 438–472 (KHLE…GKKV). Residues 316–327 (QQSTPQAANSPP) are compositionally biased toward polar residues. Ser445 carries the phosphoserine modification. The C6-type zinc finger occupies 662 to 687 (CDVCDTTIFNLHWVCPRCGFGVCVDC). The residue at position 766 (Ser766) is a Phosphoserine. The short motif at 885–889 (LRNLL) is the LXXLL motif element. At Lys895 the chain carries N6-acetyllysine. The region spanning 1058–1281 (MPSRFDDLMA…HCFWLTQEFR (224 aa)) is the JmjC domain. Fe cation-binding residues include His1120, Asp1122, and His1249.

Belongs to the JHDM2 histone demethylase family. As to quaternary structure, interacts with VRK1. The cofactor is Fe(2+).

It is found in the cytoplasm. It localises to the nucleus. It carries out the reaction N(6),N(6)-dimethyl-L-lysyl(9)-[histone H3] + 2 2-oxoglutarate + 2 O2 = L-lysyl(9)-[histone H3] + 2 formaldehyde + 2 succinate + 2 CO2. In terms of biological role, histone demethylase that specifically demethylates 'Lys-9' of histone H3, thereby playing a central role in histone code. Preferentially demethylates mono- and dimethylated H3 'Lys-9' residue, with a preference for dimethylated residue, while it has weak or no activity on trimethylated H3 'Lys-9'. Demethylation of Lys residue generates formaldehyde and succinate. Involved in hormone-dependent transcriptional activation, by participating in recruitment to androgen-receptor target genes, resulting in H3 'Lys-9' demethylation and transcriptional activation. Involved in spermatogenesis by regulating expression of target genes such as PRM1 and TNP1 which are required for packaging and condensation of sperm chromatin. Involved in obesity resistance through regulation of metabolic genes such as PPARA and UCP1. This is Lysine-specific demethylase 3A (KDM3A) from Homo sapiens (Human).